A 319-amino-acid polypeptide reads, in one-letter code: Exopolyphosphatase 2 (319 aa).

This sequence belongs to the GppA/Ppx family. Homodimer.

The catalysed reaction is [phosphate](n) + H2O = [phosphate](n-1) + phosphate + H(+). With respect to regulation, exopolyphosphatase activity is inhibited by ppGpp alarmones produced during the bacterial stringent response. Functionally, degradation of inorganic polyphosphates (polyP). Releases orthophosphate processively from the ends of the polyP chain. Prefers long-chain length polyphosphates as substrates. This chain is Exopolyphosphatase 2, found in Mycobacterium tuberculosis (strain CDC 1551 / Oshkosh).